The following is a 606-amino-acid chain: Aspartate--tRNA(Asp/Asn) ligase (606 aa).

An L-aspartate-binding site is contributed by E177. Residues 201–204 (QLFK) form an aspartate region. Residue R223 coordinates L-aspartate. Residues 223 to 225 (RDE) and Q232 contribute to the ATP site. H461 contributes to the L-aspartate binding site. An ATP-binding site is contributed by E499. R506 is an L-aspartate binding site. 551 to 554 (GMDR) contacts ATP.

It belongs to the class-II aminoacyl-tRNA synthetase family. Type 1 subfamily. Homodimer.

The protein resides in the cytoplasm. It catalyses the reaction tRNA(Asx) + L-aspartate + ATP = L-aspartyl-tRNA(Asx) + AMP + diphosphate. Its function is as follows. Aspartyl-tRNA synthetase with relaxed tRNA specificity since it is able to aspartylate not only its cognate tRNA(Asp) but also tRNA(Asn). Reaction proceeds in two steps: L-aspartate is first activated by ATP to form Asp-AMP and then transferred to the acceptor end of tRNA(Asp/Asn). The sequence is that of Aspartate--tRNA(Asp/Asn) ligase from Prochlorococcus marinus (strain MIT 9313).